We begin with the raw amino-acid sequence, 366 residues long: Phenylalanine--tRNA ligase alpha subunit (366 aa).

Residue Glu259 participates in Mg(2+) binding.

Belongs to the class-II aminoacyl-tRNA synthetase family. Phe-tRNA synthetase alpha subunit type 1 subfamily. As to quaternary structure, tetramer of two alpha and two beta subunits. The cofactor is Mg(2+).

It is found in the cytoplasm. It carries out the reaction tRNA(Phe) + L-phenylalanine + ATP = L-phenylalanyl-tRNA(Phe) + AMP + diphosphate + H(+). The polypeptide is Phenylalanine--tRNA ligase alpha subunit (Novosphingobium aromaticivorans (strain ATCC 700278 / DSM 12444 / CCUG 56034 / CIP 105152 / NBRC 16084 / F199)).